A 563-amino-acid chain; its full sequence is Putative cytochrome c oxidase subunit 1-beta (563 aa).

7 helical membrane passes run 34–54 (IGHLYLITSFAFFLIGGVMAL), 76–96 (LFTLHGTIMLLLFATPTFAGF), 117–137 (MLSYWLFLFGGLIVLGSLAVP), 164–184 (MWIMGLALAGFGTILGSVNFL), 208–228 (LFTSILVLMAFPVLAAALLVL), 252–272 (LFWFFGHPEVYIIALPFFGII), and 284–304 (IFGYLTLIGATAAITGLSVVV). Residue His80 participates in Fe(II)-heme a binding. Positions 258 and 262 each coordinate Cu cation. Residues 258 to 262 (HPEVY) constitute a cross-link (1'-histidyl-3'-tyrosine (His-Tyr)). 2 residues coordinate Cu cation: His307 and His308. Transmembrane regions (helical) follow at residues 309-329 (MFATGAVLLPFFSFMSFLIAV) and 353-373 (MLWATGFLVSFLFGGLTGVIL). Position 391 (His391) interacts with heme a3. The next 3 membrane-spanning stretches (helical) occupy residues 392-412 (FHYVVFGTVVFATFGGFYFWW), 427-447 (IHFWTLFVGFHTTFLVQHWLG), and 470-490 (LSTIGAFLLGMSTLPFLYNVW). Fe(II)-heme a is bound at residue His393. Residues 536–563 (AFDLHHPAHAGEAPQPEPKHEQADREPS) are disordered. Positions 552 to 563 (EPKHEQADREPS) are enriched in basic and acidic residues.

The protein belongs to the heme-copper respiratory oxidase family. In terms of assembly, associates with subunits II, III and IV to form cytochrome c oxidase. Cu(2+) serves as cofactor. It depends on heme as a cofactor.

It is found in the cell membrane. It carries out the reaction 4 Fe(II)-[cytochrome c] + O2 + 8 H(+)(in) = 4 Fe(III)-[cytochrome c] + 2 H2O + 4 H(+)(out). It participates in energy metabolism; oxidative phosphorylation. Cytochrome c oxidase is the component of the respiratory chain that catalyzes the reduction of oxygen to water. Subunits 1-3 form the functional core of the enzyme complex. CO I is the catalytic subunit of the enzyme. Electrons originating in cytochrome c are transferred via the copper A center of subunit 2 and heme A of subunit 1 to the bimetallic center formed by heme A3 and copper B. This is Putative cytochrome c oxidase subunit 1-beta (ctaD2) from Streptomyces avermitilis (strain ATCC 31267 / DSM 46492 / JCM 5070 / NBRC 14893 / NCIMB 12804 / NRRL 8165 / MA-4680).